The following is a 634-amino-acid chain: Frizzled and smoothened-like protein D (634 aa).

Residues 1–21 form the signal peptide; that stretch reads MINKFKFYLIFLKLILILVNC. The Extracellular portion of the chain corresponds to 22 to 257; the sequence is QNSLNDYGFG…QMDSVINMSK (236 aa). One can recognise an FZ domain in the interval 34-178; it reads DESSICTSYI…LTKYGYTANG (145 aa). N-linked (GlcNAc...) asparagine glycosylation is found at Asn126, Asn168, Asn215, Asn243, and Asn254. The helical transmembrane segment at 258–278 threads the bilayer; that stretch reads AMSSISFVLSLFNVITFGLLI. Residues 279 to 287 lie on the Cytoplasmic side of the membrane; the sequence is KKKSKYNVC. Residues 288-308 form a helical membrane-spanning segment; it reads IALMAIGSSFIYLSDIINYGV. Residues 309 to 335 lie on the Extracellular side of the membrane; that stretch reads GIEKQLCPEPGRVATQRVDSLCGFTGS. A helical transmembrane segment spans residues 336–356; the sequence is IFHIGITLCVLWSMTMGIVLY. Over 357–368 the chain is Cytoplasmic; it reads SKIKQFKLPNFR. Residues 369–389 form a helical membrane-spanning segment; that stretch reads YFLIGNLSFTVVTLIILASAK. The Extracellular portion of the chain corresponds to 390 to 410; sequence KFQGGNGFLECWMRDRWYVVA. The helical transmembrane segment at 411-431 threads the bilayer; it reads IFWIPCGIALLLGVLSICGVI. Residues 432–454 are Cytoplasmic-facing; sequence FEIYKISKNVSLKDSKVVIRELK. The helical transmembrane segment at 455 to 475 threads the bilayer; it reads PFVLVVTVSASLIYLFVFYFD. The Extracellular portion of the chain corresponds to 476–513; the sequence is SESKYDFYKKGVEDYILCLLTSENPLDECYTVGPNFNS. A helical membrane pass occupies residues 514-534; the sequence is YFMFYFLIRFFGILFFGIFGT. Over 535-634 the chain is Cytoplasmic; that stretch reads SEIARNAWTE…MEIELDSIDI (100 aa). Residues 560-624 are disordered; sequence VSSSTRGGGG…NNNNNDNNNK (65 aa). Low complexity-rich tracts occupy residues 572 to 592 and 609 to 622; these read SGIK…NNST and DNTI…NDNN.

It belongs to the G-protein coupled receptor Fz/Smo family.

The protein localises to the membrane. The protein is Frizzled and smoothened-like protein D (fslD) of Dictyostelium discoideum (Social amoeba).